The sequence spans 362 residues: Atypical chemokine receptor 3 (362 aa).

Over 1-47 (MDVHLFDYAEPGNYSDINWPCNSSDCIVVDTVQCPTMPNKNVLLYTL) the chain is Extracellular. Residues Asn13 and Asn22 are each glycosylated (N-linked (GlcNAc...) asparagine). A helical transmembrane segment spans residues 48-68 (SFIYIFIFVIGMIANSVVVWV). Over 69 to 81 (NIQAKTTGYDTHC) the chain is Cytoplasmic. The helical transmembrane segment at 82–102 (YILNLAIADLWVVITIPVWVV) threads the bilayer. Topologically, residues 103–118 (SLVQHNQWPMGELTCK) are extracellular. Residues Cys117 and Cys196 are joined by a disulfide bond. A helical transmembrane segment spans residues 119 to 139 (ITHLIFSINLFGSIFFLACMS). Residues 140-162 (VDRYLSITYFTGTSSYKKKMVRR) lie on the Cytoplasmic side of the membrane. The chain crosses the membrane as a helical span at residues 163–183 (VVCILVWLLAFFVSLPDTYYL). Residues 184-213 (KTVTSASNNETYCRSFYPEHSIKEWLIGME) are Extracellular-facing. Residues 214 to 234 (LVSVILGFAVPFTIIAIFYFL) form a helical membrane-spanning segment. Residues 235–252 (LARAMSASGDQEKHSSRK) lie on the Cytoplasmic side of the membrane. A helical transmembrane segment spans residues 253 to 273 (IIFSYVVVFLVCWLPYHFVVL). The Extracellular portion of the chain corresponds to 274–296 (LDIFSILHYIPFTCQLENVLFTA). A helical membrane pass occupies residues 297 to 319 (LHVTQCLSLVHCCVNPVLYSFIN). Residues 320–362 (RNYRYELMKAFIFKYSAKTGLTKLIDASRVSETEYSALEQNTK) are Cytoplasmic-facing. Residues 324-362 (YELMKAFIFKYSAKTGLTKLIDASRVSETEYSALEQNTK) form a C-terminal cytoplasmic tail region. A phosphoserine mark is found at Ser347, Ser350, and Ser355.

This sequence belongs to the G-protein coupled receptor 1 family. Atypical chemokine receptor subfamily. Homodimer. Can form heterodimers with CXCR4; heterodimerization may regulate CXCR4 signaling activity. Interacts with ARRB1 and ARRB2. Post-translationally, the Ser/Thr residues in the C-terminal cytoplasmic tail may be phosphorylated. Ubiquitinated at the Lys residues in its C-terminal cytoplasmic tail and is essential for correct trafficking from and to the cell membrane. Deubiquitinated by CXCL12-stimulation in a reversible manner. Not detected in blood, liver, lung and heart, but high expression detected in several tumor cell lines (at protein level). Expressed in heart, spleen, kidney, lung, ovary, brain, testis, astrocytes, neutrophils and B-lymphocytes.

It localises to the cell membrane. It is found in the early endosome. The protein resides in the recycling endosome. In terms of biological role, atypical chemokine receptor that controls chemokine levels and localization via high-affinity chemokine binding that is uncoupled from classic ligand-driven signal transduction cascades, resulting instead in chemokine sequestration, degradation, or transcytosis. Also known as interceptor (internalizing receptor) or chemokine-scavenging receptor or chemokine decoy receptor. Acts as a receptor for chemokines CXCL11 and CXCL12/SDF1. Chemokine binding does not activate G-protein-mediated signal transduction but instead induces beta-arrestin recruitment, leading to ligand internalization and activation of MAPK signaling pathway. Required for regulation of CXCR4 protein levels in migrating interneurons, thereby adapting their chemokine responsiveness. In glioma cells, transduces signals via MEK/ERK pathway, mediating resistance to apoptosis. Promotes cell growth and survival. Not involved in cell migration, adhesion or proliferation of normal hematopoietic progenitors but activated by CXCL11 in malignant hemapoietic cells, leading to phosphorylation of ERK1/2 (MAPK3/MAPK1) and enhanced cell adhesion and migration. Plays a regulatory role in CXCR4-mediated activation of cell surface integrins by CXCL12. Required for heart valve development. Regulates axon guidance in the oculomotor system through the regulation of CXCL12 levels. This is Atypical chemokine receptor 3 from Mus musculus (Mouse).